The following is a 239-amino-acid chain: Apoptosis regulator Bcl-2 (239 aa).

The BH4 signature appears at 10–30 (DNREIVMKYIHYKLSQRGYEW). The segment at 39-85 (PPGAAPAPGIFSSQPGHTPHPAASRDPVARTSPLQTPAAPGAAAGPA) is disordered. Phosphothreonine; by MAPK8 is present on T69. S70 carries the phosphoserine; by MAPK8 and PKC modification. Residues 75–85 (PAAPGAAAGPA) are compositionally biased toward low complexity. S87 carries the phosphoserine; by MAPK8 modification. The required for interaction with SEPTIN4 isoform ARTS. Required XIAP-mediated ubiquitination and apoptosis stretch occupies residues 92-107 (VVHLTLRQAGDDFSRR). The BH3 motif lies at 93–107 (VHLTLRQAGDDFSRR). A BH1 motif is present at residues 136–155 (ELFRDGVNWGRIVAFFEFGG). A BH2 motif is present at residues 187–202 (TWIQDNGGWDAFVELY). Residues 212–233 (FSWLSLKTLLSLALVGACITLG) traverse the membrane as a helical segment.

This sequence belongs to the Bcl-2 family. As to quaternary structure, forms homodimers, and heterodimers with BAX, BAD, BAK and Bcl-X(L). Heterodimerization with BAX requires intact BH1 and BH2 motifs, and is necessary for anti-apoptotic activity. Part of a complex composed of SEPTIN4 isoform ARTS, XIAP and BCL2, within the complex interacts (via BH3 domain) with SEPTIN4 isoform ARTS and XIAP, SEPTIN4 isoform ARTS acts as a scaffold protein and stabilizes the complex. Component of the complex, at least composed of LRPPRC, BECN1 and BCL2; the interactions prevent BECN1 from forming an autophagy-inducing complex with PIK3C3. Interacts with EI24. Also interacts with APAF1, BBC3, BCL2L1, BNIPL, MRPL41 and TP53BP2. Binding to FKBP8 seems to target BCL2 to the mitochondria and probably interferes with the binding of BCL2 to its targets. Interacts with BAG1 in an ATP-dependent manner. Interacts with RAF1 (the 'Ser-338' and 'Ser-339' phosphorylated form). Interacts (via the BH4 domain) with EGLN3; the interaction prevents the formation of the BAX-BCL2 complex and inhibits the anti-apoptotic activity of BCL2. Interacts with G0S2; this interaction also prevents the formation of the anti-apoptotic BAX-BCL2 complex. Interacts with RTL10/BOP. Interacts with the SCF(FBXO10) complex. Interacts (via the loop between motifs BH4 and BH3) with NLRP1 (via LRR repeats), but not with NLRP2, NLRP3, NLRP4, PYCARD, nor MEFV. Interacts with GIMAP3/IAN4, GIMAP4/IAN1 and GIMAP5/IAN5. Interacts with BCAP31. Interacts with IRF3; the interaction is inhibited by Sendai virus infection. Interacts with BECN1; thereby inhibiting autophagy in non-starvation conditions. Interacts with AMBRA1; thereby inhibiting autophagy. In terms of assembly, (Microbial infection) Interacts with Toxoplasma gondii ROP17; the interaction probably promotes BCL2 phosphorylation and degradation. Phosphorylation/dephosphorylation on Ser-70 regulates anti-apoptotic activity. Growth factor-stimulated phosphorylation on Ser-70 by PKC is required for the anti-apoptosis activity and occurs during the G2/M phase of the cell cycle. In the absence of growth factors, BCL2 appears to be phosphorylated by other protein kinases such as ERKs and stress-activated kinases. Phosphorylated by MAPK8/JNK1 at Thr-69, Ser-70 and Ser-87, which stimulates starvation-induced autophagy. Dephosphorylated by protein phosphatase 2A (PP2A). In terms of processing, proteolytically cleaved by caspases during apoptosis. The cleaved protein, lacking the BH4 motif, has pro-apoptotic activity, causes the release of cytochrome c into the cytosol promoting further caspase activity. Post-translationally, monoubiquitinated by PRKN, leading to an increase in its stability. Ubiquitinated by SCF(FBXO10), leading to its degradation by the proteasome. Ubiquitinated by XIAP, leading to its degradation by the proteasome. In terms of tissue distribution, expressed in a variety of tissues.

The protein localises to the mitochondrion outer membrane. The protein resides in the nucleus membrane. Its subcellular location is the endoplasmic reticulum membrane. It is found in the cytoplasm. Its function is as follows. Suppresses apoptosis in a variety of cell systems including factor-dependent lymphohematopoietic and neural cells. Regulates cell death by controlling the mitochondrial membrane permeability. Appears to function in a feedback loop system with caspases. Inhibits caspase activity either by preventing the release of cytochrome c from the mitochondria and/or by binding to the apoptosis-activating factor (APAF-1). Also acts as an inhibitor of autophagy: interacts with BECN1 and AMBRA1 during non-starvation conditions and inhibits their autophagy function. May attenuate inflammation by impairing NLRP1-inflammasome activation, hence CASP1 activation and IL1B release. The polypeptide is Apoptosis regulator Bcl-2 (BCL2) (Homo sapiens (Human)).